The following is a 443-amino-acid chain: Cyclic GMP-AMP synthase (443 aa).

Ser-61 provides a ligand contact to ATP. Active-site residues include Asp-78 and Asp-80. Asp-80 provides a ligand contact to Mg(2+). Asn-124 contributes to the ATP binding site. Asp-138 is an active-site residue. Asp-138 contacts Mg(2+). Leu-208 provides a ligand contact to ATP.

This sequence belongs to the CD-NTase family. B06 subfamily. Mg(2+) is required as a cofactor.

It catalyses the reaction GTP + ATP = 3',3'-cGAMP + 2 diphosphate. It carries out the reaction UTP + ATP = 3',3'-cUAMP + 2 diphosphate. The enzyme catalyses 2 ATP = 3',3'-c-di-AMP + 2 diphosphate. The catalysed reaction is 2 GTP = 3',3'-c-di-GMP + 2 diphosphate. It catalyses the reaction UTP + GTP = 3',3'-cGMP-UMP + 2 diphosphate. Cyclic nucleotide synthase (second messenger synthase) of a CBASS antivirus system. CBASS (cyclic oligonucleotide-based antiphage signaling system) provides immunity against bacteriophages. The CD-NTase protein (CdnB, this protein) synthesizes cyclic nucleotides in response to infection; these serve as specific second messenger signals. The signals activate a diverse range of effectors, leading to bacterial cell death and thus abortive phage infection. The effector protein for this system is membrane protein Cap15. Its function is as follows. Catalyzes the synthesis of 3',3'-cyclic GMP-AMP (3'3'-cGAMP) from GTP and ATP, a second messenger in cell signal transduction. Also makes cyclic UMP-AMP, cyclic UMP-GMP, cyclic di-AMP and cyclic-di-GMP. Functionally, protects E.coli against phage infection. When the CBASS operon (cdnB-cap15) is introduced in E.coli MG1655 there is about 100-fold protection against phage T2 and about 10-fold protection against phage T5 and T6. This chain is Cyclic GMP-AMP synthase, found in Escherichia albertii.